Consider the following 350-residue polypeptide: tRNA pseudouridine synthase D (350 aa).

Catalysis depends on D79, which acts as the Nucleophile. The TRUD domain maps to 154 to 306; that stretch reads GAPNYYGPQR…EQERRPIVLY (153 aa).

Belongs to the pseudouridine synthase TruD family.

It catalyses the reaction uridine(13) in tRNA = pseudouridine(13) in tRNA. Responsible for synthesis of pseudouridine from uracil-13 in transfer RNAs. This chain is tRNA pseudouridine synthase D, found in Pseudoalteromonas atlantica (strain T6c / ATCC BAA-1087).